The following is a 428-amino-acid chain: Proline--tRNA ligase (428 aa).

This sequence belongs to the class-II aminoacyl-tRNA synthetase family. ProS type 2 subfamily. In terms of assembly, homodimer.

The protein localises to the cytoplasm. It carries out the reaction tRNA(Pro) + L-proline + ATP = L-prolyl-tRNA(Pro) + AMP + diphosphate. Catalyzes the attachment of proline to tRNA(Pro) in a two-step reaction: proline is first activated by ATP to form Pro-AMP and then transferred to the acceptor end of tRNA(Pro). This chain is Proline--tRNA ligase, found in Rickettsia typhi (strain ATCC VR-144 / Wilmington).